The following is a 260-amino-acid chain: Adenosylcobinamide-GDP ribazoletransferase (260 aa).

The next 6 helical transmembrane spans lie at 40–60, 64–84, 117–137, 192–212, 214–234, and 240–260; these read AFPLAGAVLGLLAGAVLFMAY, LPPLACAMLAIGALAAMTGAL, FAALTLIVFVGLKAALLMTII, GIGLAFLVFTLIPAGGFLSLI, ALVLATGLLFGFARLCIAKIG, and TLGAAQQIGSVAVLAGLVMAL.

The protein belongs to the CobS family. It depends on Mg(2+) as a cofactor.

It is found in the cell inner membrane. The catalysed reaction is alpha-ribazole + adenosylcob(III)inamide-GDP = adenosylcob(III)alamin + GMP + H(+). It carries out the reaction alpha-ribazole 5'-phosphate + adenosylcob(III)inamide-GDP = adenosylcob(III)alamin 5'-phosphate + GMP + H(+). It functions in the pathway cofactor biosynthesis; adenosylcobalamin biosynthesis; adenosylcobalamin from cob(II)yrinate a,c-diamide: step 7/7. Functionally, joins adenosylcobinamide-GDP and alpha-ribazole to generate adenosylcobalamin (Ado-cobalamin). Also synthesizes adenosylcobalamin 5'-phosphate from adenosylcobinamide-GDP and alpha-ribazole 5'-phosphate. This Brucella anthropi (strain ATCC 49188 / DSM 6882 / CCUG 24695 / JCM 21032 / LMG 3331 / NBRC 15819 / NCTC 12168 / Alc 37) (Ochrobactrum anthropi) protein is Adenosylcobinamide-GDP ribazoletransferase.